A 248-amino-acid polypeptide reads, in one-letter code: Putative TrmH family tRNA/rRNA methyltransferase (248 aa).

Residues Gly-196, Ile-216, and Leu-225 each contribute to the S-adenosyl-L-methionine site.

The protein belongs to the class IV-like SAM-binding methyltransferase superfamily. RNA methyltransferase TrmH family.

This chain is Putative TrmH family tRNA/rRNA methyltransferase, found in Staphylococcus aureus (strain Mu50 / ATCC 700699).